The primary structure comprises 86 residues: Thioredoxin (86 aa).

Active-site nucleophile residues include C15 and C18. C15 and C18 are joined by a disulfide.

Belongs to the glutaredoxin family.

Its function is as follows. Does not function as a glutathione-disulfide oxidoreductase in the presence of glutathione and glutathione reductase. Has low thioredoxin activity in vitro. The chain is Thioredoxin from Methanocaldococcus jannaschii (strain ATCC 43067 / DSM 2661 / JAL-1 / JCM 10045 / NBRC 100440) (Methanococcus jannaschii).